Here is a 343-residue protein sequence, read N- to C-terminus: Lipopolysaccharide core biosynthesis glycosyltransferase LpsD (343 aa).

The protein belongs to the glycosyltransferase group 1 family. Glycosyltransferase 4 subfamily.

It participates in bacterial outer membrane biogenesis; LPS core biosynthesis. The chain is Lipopolysaccharide core biosynthesis glycosyltransferase LpsD (lpsD) from Rhizobium meliloti (strain 1021) (Ensifer meliloti).